The following is a 218-amino-acid chain: Octanoyltransferase (218 aa).

Residues 32 to 218 enclose the BPL/LPL catalytic domain; that stretch reads GEAAEAIWLL…LRTFPQHFPD (187 aa). Residues 71-78, 151-153, and 164-166 each bind substrate; these read RGGQYTYH, AIG, and GLS. Catalysis depends on Cys182, which acts as the Acyl-thioester intermediate.

Belongs to the LipB family.

The protein resides in the cytoplasm. It catalyses the reaction octanoyl-[ACP] + L-lysyl-[protein] = N(6)-octanoyl-L-lysyl-[protein] + holo-[ACP] + H(+). Its pathway is protein modification; protein lipoylation via endogenous pathway; protein N(6)-(lipoyl)lysine from octanoyl-[acyl-carrier-protein]: step 1/2. Functionally, catalyzes the transfer of endogenously produced octanoic acid from octanoyl-acyl-carrier-protein onto the lipoyl domains of lipoate-dependent enzymes. Lipoyl-ACP can also act as a substrate although octanoyl-ACP is likely to be the physiological substrate. This Cereibacter sphaeroides (strain ATCC 17023 / DSM 158 / JCM 6121 / CCUG 31486 / LMG 2827 / NBRC 12203 / NCIMB 8253 / ATH 2.4.1.) (Rhodobacter sphaeroides) protein is Octanoyltransferase.